Here is a 207-residue protein sequence, read N- to C-terminus: Holliday junction branch migration complex subunit RuvA (207 aa).

Residues 1-63 form a domain I region; the sequence is MIDSLHGEVL…DDGIDLYAFE (63 aa). The segment at 64–142 is domain II; that stretch reads SDEARQMFAM…VFDSGDSASE (79 aa). Residues 143–154 form a flexible linker region; it reads PQSGVGGNSEAE. The domain III stretch occupies residues 155–207; sequence VDSGVVGTVTQALVELGFPEKQAEKTATSAAAEGGSVSEILKRALRSMSSERN.

Belongs to the RuvA family. In terms of assembly, homotetramer. Forms an RuvA(8)-RuvB(12)-Holliday junction (HJ) complex. HJ DNA is sandwiched between 2 RuvA tetramers; dsDNA enters through RuvA and exits via RuvB. An RuvB hexamer assembles on each DNA strand where it exits the tetramer. Each RuvB hexamer is contacted by two RuvA subunits (via domain III) on 2 adjacent RuvB subunits; this complex drives branch migration. In the full resolvosome a probable DNA-RuvA(4)-RuvB(12)-RuvC(2) complex forms which resolves the HJ.

It is found in the cytoplasm. The RuvA-RuvB-RuvC complex processes Holliday junction (HJ) DNA during genetic recombination and DNA repair, while the RuvA-RuvB complex plays an important role in the rescue of blocked DNA replication forks via replication fork reversal (RFR). RuvA specifically binds to HJ cruciform DNA, conferring on it an open structure. The RuvB hexamer acts as an ATP-dependent pump, pulling dsDNA into and through the RuvAB complex. HJ branch migration allows RuvC to scan DNA until it finds its consensus sequence, where it cleaves and resolves the cruciform DNA. This chain is Holliday junction branch migration complex subunit RuvA, found in Corynebacterium kroppenstedtii (strain DSM 44385 / JCM 11950 / CIP 105744 / CCUG 35717).